The sequence spans 373 residues: ATP phosphoribosyltransferase regulatory subunit (373 aa).

It belongs to the class-II aminoacyl-tRNA synthetase family. HisZ subfamily. Heteromultimer composed of HisG and HisZ subunits.

It localises to the cytoplasm. It functions in the pathway amino-acid biosynthesis; L-histidine biosynthesis; L-histidine from 5-phospho-alpha-D-ribose 1-diphosphate: step 1/9. In terms of biological role, required for the first step of histidine biosynthesis. May allow the feedback regulation of ATP phosphoribosyltransferase activity by histidine. This chain is ATP phosphoribosyltransferase regulatory subunit, found in Chelativorans sp. (strain BNC1).